The following is a 762-amino-acid chain: Mediator of RNA polymerase II transcription subunit 15 (762 aa).

3 disordered regions span residues 70-102 (AQQA…INAL), 311-330 (GVGH…GMGP), and 406-494 (GSGG…LNPQ). Residues 76–94 (DGGGNSSQQGGGGGGGGSG) show a composition bias toward gly residues. Polar residues predominate over residues 465–481 (QRSTIGQSPGGSLNTPG).

This sequence belongs to the Mediator complex subunit 15 family. Component of the Mediator complex.

Its subcellular location is the nucleus. In terms of biological role, component of the Mediator complex, a coactivator involved in the regulated transcription of nearly all RNA polymerase II-dependent genes. Mediator functions as a bridge to convey information from gene-specific regulatory proteins to the basal RNA polymerase II transcription machinery. Mediator is recruited to promoters by direct interactions with regulatory proteins and serves as a scaffold for the assembly of a functional preinitiation complex with RNA polymerase II and the general transcription factors. The sequence is that of Mediator of RNA polymerase II transcription subunit 15 (MED15) from Anopheles gambiae (African malaria mosquito).